Consider the following 344-residue polypeptide: Phosphoribosylformylglycinamidine cyclo-ligase (344 aa).

This sequence belongs to the AIR synthase family.

The protein localises to the cytoplasm. The enzyme catalyses 2-formamido-N(1)-(5-O-phospho-beta-D-ribosyl)acetamidine + ATP = 5-amino-1-(5-phospho-beta-D-ribosyl)imidazole + ADP + phosphate + H(+). Its pathway is purine metabolism; IMP biosynthesis via de novo pathway; 5-amino-1-(5-phospho-D-ribosyl)imidazole from N(2)-formyl-N(1)-(5-phospho-D-ribosyl)glycinamide: step 2/2. In Synechococcus sp. (strain RCC307), this protein is Phosphoribosylformylglycinamidine cyclo-ligase.